We begin with the raw amino-acid sequence, 353 residues long: Alanine racemase (353 aa).

The active-site Proton acceptor; specific for D-alanine is the Lys33. Lys33 is modified (N6-(pyridoxal phosphate)lysine). Arg129 provides a ligand contact to substrate. Catalysis depends on Tyr250, which acts as the Proton acceptor; specific for L-alanine. Met298 contributes to the substrate binding site.

It belongs to the alanine racemase family. Pyridoxal 5'-phosphate serves as cofactor.

It catalyses the reaction L-alanine = D-alanine. The protein operates within amino-acid biosynthesis; D-alanine biosynthesis; D-alanine from L-alanine: step 1/1. Functionally, catalyzes the interconversion of L-alanine and D-alanine. May also act on other amino acids. This chain is Alanine racemase (alr), found in Azoarcus sp. (strain BH72).